Consider the following 71-residue polypeptide: Large ribosomal subunit protein bL31 (71 aa).

Zn(2+) contacts are provided by C16, C18, C37, and C40.

Belongs to the bacterial ribosomal protein bL31 family. Type A subfamily. Part of the 50S ribosomal subunit. The cofactor is Zn(2+).

Functionally, binds the 23S rRNA. In Actinobacillus succinogenes (strain ATCC 55618 / DSM 22257 / CCUG 43843 / 130Z), this protein is Large ribosomal subunit protein bL31.